Reading from the N-terminus, the 711-residue chain is Polyribonucleotide nucleotidyltransferase (711 aa).

Mg(2+) is bound by residues D486 and D492. The KH domain maps to 553–612 (PRIHTIKINPDKIKDVIGKGGSVIRALTEETGTTIEIEDDGTVKIAATDGEKAKHAIRRI). The S1 motif domain occupies 622–690 (GRVYNGKVTR…RQGRIRLSIK (69 aa)). Positions 690 to 711 (KEATEQSQPAAALEAPAAEQGE) are disordered. A compositionally biased stretch (low complexity) spans 698–711 (PAAALEAPAAEQGE).

This sequence belongs to the polyribonucleotide nucleotidyltransferase family. Component of the RNA degradosome, which is a multiprotein complex involved in RNA processing and mRNA degradation. Mg(2+) is required as a cofactor.

The protein resides in the cytoplasm. It carries out the reaction RNA(n+1) + phosphate = RNA(n) + a ribonucleoside 5'-diphosphate. Functionally, involved in mRNA degradation. Catalyzes the phosphorolysis of single-stranded polyribonucleotides processively in the 3'- to 5'-direction. This Escherichia coli O127:H6 (strain E2348/69 / EPEC) protein is Polyribonucleotide nucleotidyltransferase.